Consider the following 325-residue polypeptide: tRNA N6-adenosine threonylcarbamoyltransferase (325 aa).

Residues His-107 and His-111 each contribute to the Fe cation site. Residues 129–133, Asp-162, Gly-175, and Asn-265 contribute to the substrate site; that span reads LVSGG. A Fe cation-binding site is contributed by Asp-293.

It belongs to the KAE1 / TsaD family. The cofactor is Fe(2+).

The protein localises to the cytoplasm. The catalysed reaction is L-threonylcarbamoyladenylate + adenosine(37) in tRNA = N(6)-L-threonylcarbamoyladenosine(37) in tRNA + AMP + H(+). Its function is as follows. Required for the formation of a threonylcarbamoyl group on adenosine at position 37 (t(6)A37) in tRNAs that read codons beginning with adenine. Is involved in the transfer of the threonylcarbamoyl moiety of threonylcarbamoyl-AMP (TC-AMP) to the N6 group of A37, together with TsaE and TsaB. TsaD likely plays a direct catalytic role in this reaction. This is tRNA N6-adenosine threonylcarbamoyltransferase from Sulfurimonas denitrificans (strain ATCC 33889 / DSM 1251) (Thiomicrospira denitrificans (strain ATCC 33889 / DSM 1251)).